The primary structure comprises 1958 residues: Callose synthase 7 (1958 aa).

Residues 1-29 form a disordered region; the sequence is MASTSSGGRGEDGRPPQMQPVRSMSRKMT. Residues 1–504 are Cytoplasmic-facing; sequence MASTSSGGRG…LYRSFDRMWM (504 aa). The chain crosses the membrane as a helical span at residues 505-525; that stretch reads FLVLSLQTMIIVAWHPSGSIL. Over 526–535 the chain is Extracellular; the sequence is AIFTEDVFRN. A helical transmembrane segment spans residues 536-556; the sequence is VLTIFITSAFLNLLQATLDLV. Residues 557-569 lie on the Cytoplasmic side of the membrane; it reads LSFGAWKSLKFSQ. The chain crosses the membrane as a helical span at residues 570–590; the sequence is IMRYITKFLMAAMWAIMLPIT. At 591–620 the chain is on the extracellular side; the sequence is YSKSVQNPTGLIKFFSSWVGSWLHRSLYDY. The chain crosses the membrane as a helical span at residues 621–641; sequence AIALYVLPNILAAVFFLLPPL. At 642–673 the chain is on the cytoplasmic side; sequence RRIMERSNMRIVTLIMWWAQPKLYIGRGMHEE. Residues 674-694 traverse the membrane as a helical segment; sequence MFALFKYTFFWVMLLLSKLAF. Residues 695–730 lie on the Extracellular side of the membrane; the sequence is SYYVEILPLVNPTKLIWDMHVVNYEWHEFFPNATHN. The chain crosses the membrane as a helical span at residues 731 to 751; that stretch reads IGVIIAIWGPIVLVYFMDTQI. Topologically, residues 752 to 1496 are cytoplasmic; it reads WYAIFSTLFG…FDFYRMLSFY (745 aa). A helical membrane pass occupies residues 1497-1517; sequence FTTVGFYFSSMITVLTVYVFL. Residues 1518 to 1547 lie on the Extracellular side of the membrane; it reads YGRLYLVLSGLEKNILQSASVHESNALEQA. Residues 1548 to 1568 form a helical membrane-spanning segment; the sequence is LAAQSVFQLGFLMVLPMVMEI. The Cytoplasmic portion of the chain corresponds to 1569–1576; that stretch reads GLEKGFRT. Residues 1577 to 1597 traverse the membrane as a helical segment; the sequence is ALGDFIIMQLQLASVFFTFQL. Residues 1598–1640 lie on the Extracellular side of the membrane; the sequence is GTKAHYFGRTILHGGSKYRATGRGFVVFHAKFAENYRLYSRSH. The helical transmembrane segment at 1641–1661 threads the bilayer; that stretch reads FVKGLELVILLVVYQVYGTSY. Over 1662 to 1667 the chain is Cytoplasmic; it reads RSSSTY. The chain crosses the membrane as a helical span at residues 1668 to 1688; it reads MYITFSMWFLVTSWLFAPFIF. Residues 1689 to 1742 are Extracellular-facing; that stretch reads NPSGFEWQKTVDDWTDWKRWMGNRGGIGIVLDKSWESWWDIEQEHLKHTNLRGR. The helical transmembrane segment at 1743–1763 threads the bilayer; that stretch reads VLEILLALRFLLYQYGIVYHL. The Cytoplasmic portion of the chain corresponds to 1764-1771; sequence NIARRHTT. The chain crosses the membrane as a helical span at residues 1772-1792; it reads FLVYGLSWAILLSVLLVLKMV. The Extracellular portion of the chain corresponds to 1793–1812; sequence SMGRRKFGTDFQVMFRILKA. A helical membrane pass occupies residues 1813–1833; sequence LLFLGFLSVMTVLFVVCGLTI. Over 1834–1835 the chain is Cytoplasmic; sequence SD. Residues 1836–1856 form a helical membrane-spanning segment; the sequence is LFASILAFLPTGWAILLIGQA. Over 1857–1878 the chain is Extracellular; the sequence is LRSVFKGLGFWDSVKELGRAYE. The chain crosses the membrane as a helical span at residues 1879 to 1899; sequence YIMGLVIFTPIAVLSWFPFVS. Topologically, residues 1900 to 1958 are cytoplasmic; sequence EFQTRLLFNQAFSRGLQISMILAGKKDKETPSTKYLGHTEESFGLEHDTNTFNHYYLWT.

This sequence belongs to the glycosyltransferase 48 family.

Its subcellular location is the cell membrane. It catalyses the reaction [(1-&gt;3)-beta-D-glucosyl](n) + UDP-alpha-D-glucose = [(1-&gt;3)-beta-D-glucosyl](n+1) + UDP + H(+). Functionally, involved in callose synthesis at the forming cell plate during cytokinesis. During plant growth and development, callose is found as a transitory component of the cell plate in dividing cells, is a major component of pollen mother cell walls and pollen tubes, and is found as a structural component of plasmodesmatal canals. This Arabidopsis thaliana (Mouse-ear cress) protein is Callose synthase 7 (CALS7).